We begin with the raw amino-acid sequence, 431 residues long: MAVAVGRPSNEELRNLSLSGHVGFDSLPDQLVNKSTSQGFCFNILCVGETGIGKSTLMDTLFNTKFESDPATHNEPGVRLKARSYELQESNVRLKLTIVDTVGFGDQINKDDSYKPIVEYIDAQFEAYLQEELKIKRSLFNYHDTRIHACLYFIAPTGHSLKSLDLVTMKKLDSKVNIIPIIAKADTIAKNELHKFKSKIMSELVSNGVQIYQFPTDEETVAEINATMSVHLPFAVVGSTEEVKIGNKMAKARQYPWGVVQVENENHCDFVKLREMLIRVNMEDLREQTHTRHYELYRRCKLEEMGFKDTDPDSKPFSLQETYEAKRNEFLGELQKKEEEMRQMFVMRVKEKEAELKEAEKELHEKFDLLKRTHQEEKKKVEDKKKELEEEVSNFQKKKAAAQLLQSQAQQSGAQQTKKDKDKKNPWLCTE.

Ala2 carries the post-translational modification N-acetylalanine. Ser9 is subject to Phosphoserine. One can recognise a Septin-type G domain in the interval 38–304 (QGFCFNILCV…ELYRRCKLEE (267 aa)). The tract at residues 48–55 (GETGIGKS) is G1 motif. Residues 48–55 (GETGIGKS), Gly103, 184–192 (KADTIAKNE), Gly238, and Arg253 each bind GTP. The interval 100 to 103 (DTVG) is G3 motif. The interval 183–186 (AKAD) is G4 motif. The stretch at 320–413 (QETYEAKRNE…LLQSQAQQSG (94 aa)) forms a coiled coil. A disordered region spans residues 400–431 (AAAQLLQSQAQQSGAQQTKKDKDKKNPWLCTE). Positions 401-416 (AAQLLQSQAQQSGAQQ) are enriched in low complexity.

This sequence belongs to the TRAFAC class TrmE-Era-EngA-EngB-Septin-like GTPase superfamily. Septin GTPase family. As to quaternary structure, septins polymerize into heterooligomeric protein complexes that form filaments, and can associate with cellular membranes, actin filaments and microtubules. Forms homooligomers. GTPase activity is required for filament formation. Interacts with SEPTIN7, SEPTIN9 and SEPTIN12. As to expression, expressed in the cerebral cortex (at protein level).

The protein localises to the cytoplasm. It localises to the cytoskeleton. The protein resides in the synapse. Its subcellular location is the cell projection. It is found in the dendritic spine. The protein localises to the axon. Filament-forming cytoskeletal GTPase. May play a role in cytokinesis (Potential). May play a role in the cytoarchitecture of neurons, including dendritic arborization and dendritic spines, and in GABAergic synaptic connectivity. This chain is Septin-11, found in Mus musculus (Mouse).